A 975-amino-acid chain; its full sequence is Translation initiation factor IF-2 (975 aa).

The segment covering 48–63 (DHLRKSHGATDGDKRK) has biased composition (basic and acidic residues). Disordered stretches follow at residues 48–84 (DHLR…GKAR) and 98–388 (KRDD…QAPT). The span at 104 to 115 (ETGADQAQAQTD) shows a compositional bias: low complexity. The segment covering 120 to 177 (AELKRREEEARREAELLEKQAQELRERQERLEREEAERRAREEAAEAERRRAEEEAAA) has biased composition (basic and acidic residues). Residues 178–211 (KRAAAAQAEAAQQAAAAREQAQRAQSEPAEQSAQ) are compositionally biased toward low complexity. Basic and acidic residues predominate over residues 212 to 263 (DEARAAAERAAQREAAKKAEDAAREAADKARAEQEEIRKRREAAEAEARAIR). Low complexity predominate over residues 302–330 (KPAGEAAAARPAAKKPASGAPAPAAAPAG). A compositionally biased stretch (gly residues) spans 359–372 (SSGGVDRGWRGGPK). The region spanning 475 to 644 (PRPPVVTVMG…LLQAEVLELK (170 aa)) is the tr-type G domain. The tract at residues 484–491 (GHVDHGKT) is G1. 484–491 (GHVDHGKT) provides a ligand contact to GTP. The G2 stretch occupies residues 509-513 (GITQH). The interval 530–533 (DTPG) is G3. Residues 530-534 (DTPGH) and 584-587 (NKID) each bind GTP. The G4 stretch occupies residues 584-587 (NKID). A G5 region spans residues 620–622 (SAK).

This sequence belongs to the TRAFAC class translation factor GTPase superfamily. Classic translation factor GTPase family. IF-2 subfamily.

The protein resides in the cytoplasm. Its function is as follows. One of the essential components for the initiation of protein synthesis. Protects formylmethionyl-tRNA from spontaneous hydrolysis and promotes its binding to the 30S ribosomal subunits. Also involved in the hydrolysis of GTP during the formation of the 70S ribosomal complex. The sequence is that of Translation initiation factor IF-2 from Burkholderia mallei (strain NCTC 10247).